Here is a 128-residue protein sequence, read N- to C-terminus: Large ribosomal subunit protein bL21 (128 aa).

The tract at residues 104–128 (GKKPSVGPRPKRVKAEPAPAADAAE) is disordered. Positions 119–128 (EPAPAADAAE) are enriched in low complexity.

The protein belongs to the bacterial ribosomal protein bL21 family. As to quaternary structure, part of the 50S ribosomal subunit. Contacts protein L20.

In terms of biological role, this protein binds to 23S rRNA in the presence of protein L20. The sequence is that of Large ribosomal subunit protein bL21 from Rhodopseudomonas palustris (strain BisB5).